We begin with the raw amino-acid sequence, 188 residues long: Pyridoxal 5'-phosphate synthase subunit PdxT (188 aa).

Residue 46-48 coordinates L-glutamine; that stretch reads GES. Residue Cys78 is the Nucleophile of the active site. Residues Arg106 and 132–133 each bind L-glutamine; that span reads IR. Catalysis depends on charge relay system residues His169 and Glu171.

The protein belongs to the glutaminase PdxT/SNO family. As to quaternary structure, in the presence of PdxS, forms a dodecamer of heterodimers. Only shows activity in the heterodimer.

The enzyme catalyses aldehydo-D-ribose 5-phosphate + D-glyceraldehyde 3-phosphate + L-glutamine = pyridoxal 5'-phosphate + L-glutamate + phosphate + 3 H2O + H(+). It catalyses the reaction L-glutamine + H2O = L-glutamate + NH4(+). The protein operates within cofactor biosynthesis; pyridoxal 5'-phosphate biosynthesis. Catalyzes the hydrolysis of glutamine to glutamate and ammonia as part of the biosynthesis of pyridoxal 5'-phosphate. The resulting ammonia molecule is channeled to the active site of PdxS. This Tropheryma whipplei (strain TW08/27) (Whipple's bacillus) protein is Pyridoxal 5'-phosphate synthase subunit PdxT.